The primary structure comprises 701 residues: Ribosomal RNA large subunit methyltransferase K/L (701 aa).

The THUMP domain maps to 43 to 154 (LLYQSLMWSR…KETAHISLDL (112 aa)).

It belongs to the methyltransferase superfamily. RlmKL family.

Its subcellular location is the cytoplasm. It carries out the reaction guanosine(2445) in 23S rRNA + S-adenosyl-L-methionine = N(2)-methylguanosine(2445) in 23S rRNA + S-adenosyl-L-homocysteine + H(+). The enzyme catalyses guanosine(2069) in 23S rRNA + S-adenosyl-L-methionine = N(2)-methylguanosine(2069) in 23S rRNA + S-adenosyl-L-homocysteine + H(+). In terms of biological role, specifically methylates the guanine in position 2445 (m2G2445) and the guanine in position 2069 (m7G2069) of 23S rRNA. The protein is Ribosomal RNA large subunit methyltransferase K/L of Klebsiella pneumoniae subsp. pneumoniae (strain ATCC 700721 / MGH 78578).